The primary structure comprises 193 residues: MIVLGVDPGLTRCGVGVIEAGAYRRLSFIHVDVVRSDPHESQDLRLLKIYDGLCAKMDEFIPDTVSIERVFAQENRNTVLGTAQAAGMAMLAAAQRGIPVALHTPTESKMAITGNGKAEKIQMERMVARILNLNALPTPADAADALAIAICHALRPSGALEGGEREQHLTPAQRQWAQATQHATRRRGVRRGM.

Catalysis depends on residues aspartate 7, glutamate 68, and aspartate 141. The Mg(2+) site is built by aspartate 7, glutamate 68, and aspartate 141. The disordered stretch occupies residues 174–193 (RQWAQATQHATRRRGVRRGM). The segment covering 183–193 (ATRRRGVRRGM) has biased composition (basic residues).

It belongs to the RuvC family. Homodimer which binds Holliday junction (HJ) DNA. The HJ becomes 2-fold symmetrical on binding to RuvC with unstacked arms; it has a different conformation from HJ DNA in complex with RuvA. In the full resolvosome a probable DNA-RuvA(4)-RuvB(12)-RuvC(2) complex forms which resolves the HJ. It depends on Mg(2+) as a cofactor.

The protein localises to the cytoplasm. It catalyses the reaction Endonucleolytic cleavage at a junction such as a reciprocal single-stranded crossover between two homologous DNA duplexes (Holliday junction).. The RuvA-RuvB-RuvC complex processes Holliday junction (HJ) DNA during genetic recombination and DNA repair. Endonuclease that resolves HJ intermediates. Cleaves cruciform DNA by making single-stranded nicks across the HJ at symmetrical positions within the homologous arms, yielding a 5'-phosphate and a 3'-hydroxyl group; requires a central core of homology in the junction. The consensus cleavage sequence is 5'-(A/T)TT(C/G)-3'. Cleavage occurs on the 3'-side of the TT dinucleotide at the point of strand exchange. HJ branch migration catalyzed by RuvA-RuvB allows RuvC to scan DNA until it finds its consensus sequence, where it cleaves and resolves the cruciform DNA. The chain is Crossover junction endodeoxyribonuclease RuvC from Bifidobacterium animalis subsp. lactis (strain AD011).